Consider the following 160-residue polypeptide: Nucleotide-binding protein VP1617 (160 aa).

It belongs to the YajQ family.

Functionally, nucleotide-binding protein. This is Nucleotide-binding protein VP1617 from Vibrio parahaemolyticus serotype O3:K6 (strain RIMD 2210633).